Consider the following 419-residue polypeptide: MDKLKIEASEALAGNVVISGAKNAALPILMAGVLAETDFVVSNVPNLRDVKTSCELLRCLGAEVSRGDNSEVRISTTSLDHFCAPYDLVKTMRASILILGPLLARFGTADVSLPGGCAIGARPVNLHLHGLEQMGAKIEVEEGYIKARVDGRLKGAHIFMDMISVGATENLLMAATLADGETIIENAAREPEVIDLANCLIAMGAKIEGAGTDSIRIQGVESLKGCHYRVMPDRIETGSFLIAAAVTRGKIRCVDADPSTLEAVLAKLEDAGASITTGSDWIELDMQGKRPKAVNIKTVPYPGFPTDMQAQFCLLNVLAEGTSTITETIFENRFMHVPELIRMGANMELEGNTCIIQGIERLNGAQVMATDLRASASLVIAGLVADGTTIVDRIYHLDRGYEHIEDKFKGLGGHVERTQ.

22-23 (KN) contributes to the phosphoenolpyruvate binding site. Residue arginine 93 participates in UDP-N-acetyl-alpha-D-glucosamine binding. The active-site Proton donor is cysteine 117. A 2-(S-cysteinyl)pyruvic acid O-phosphothioketal modification is found at cysteine 117. Positions 307 and 329 each coordinate UDP-N-acetyl-alpha-D-glucosamine.

The protein belongs to the EPSP synthase family. MurA subfamily.

Its subcellular location is the cytoplasm. The enzyme catalyses phosphoenolpyruvate + UDP-N-acetyl-alpha-D-glucosamine = UDP-N-acetyl-3-O-(1-carboxyvinyl)-alpha-D-glucosamine + phosphate. The protein operates within cell wall biogenesis; peptidoglycan biosynthesis. Functionally, cell wall formation. Adds enolpyruvyl to UDP-N-acetylglucosamine. The sequence is that of UDP-N-acetylglucosamine 1-carboxyvinyltransferase from Shewanella sediminis (strain HAW-EB3).